The primary structure comprises 419 residues: S-adenosylmethionine synthase (419 aa).

His-15 is an ATP binding site. Asp-17 contacts Mg(2+). Glu-43 contributes to the K(+) binding site. Residues Glu-56 and Gln-100 each coordinate L-methionine. The interval 100-110 (QSPDIAQGVDE) is flexible loop. ATP-binding positions include 171 to 173 (DGK), 248 to 249 (KF), Asp-257, 263 to 264 (RK), Ala-280, and Lys-284. Asp-257 contributes to the L-methionine binding site. Lys-288 is a binding site for L-methionine.

It belongs to the AdoMet synthase family. As to quaternary structure, homotetramer; dimer of dimers. It depends on Mg(2+) as a cofactor. The cofactor is K(+).

The protein resides in the cytoplasm. It carries out the reaction L-methionine + ATP + H2O = S-adenosyl-L-methionine + phosphate + diphosphate. It participates in amino-acid biosynthesis; S-adenosyl-L-methionine biosynthesis; S-adenosyl-L-methionine from L-methionine: step 1/1. Catalyzes the formation of S-adenosylmethionine (AdoMet) from methionine and ATP. The overall synthetic reaction is composed of two sequential steps, AdoMet formation and the subsequent tripolyphosphate hydrolysis which occurs prior to release of AdoMet from the enzyme. In Parasynechococcus marenigrum (strain WH8102), this protein is S-adenosylmethionine synthase.